The primary structure comprises 352 residues: Homeobox protein Mohawk (352 aa).

The tract at residues 19–53 (GASERERGGRPYSGVLDSPHARPEVGIADGPPLKD) is disordered. Positions 71 to 132 (VRHKRQALQD…NARRRLKNTV (62 aa)) form a DNA-binding region, homeobox; TALE-type. Disordered regions lie at residues 157-194 (LSVS…IKSE) and 245-272 (TRQR…SETE).

It belongs to the TALE/IRO homeobox family.

It is found in the nucleus. Functionally, may act as a morphogenetic regulator of cell adhesion. The protein is Homeobox protein Mohawk (MKX) of Pongo abelii (Sumatran orangutan).